A 396-amino-acid chain; its full sequence is Aldo-keto reductase ausK (396 aa).

Position 76 (D76) interacts with NADP(+). Y81 functions as the Proton donor in the catalytic mechanism. H156 provides a ligand contact to substrate. Residues 186–187 (CN), Q212, 241–251 (DALGSGKFQSR), and 317–325 (RKIQHLHDN) each bind NADP(+).

This sequence belongs to the aldo/keto reductase family. Aldo/keto reductase 2 subfamily. In terms of assembly, homodimer.

It functions in the pathway secondary metabolite biosynthesis; terpenoid biosynthesis. Its function is as follows. Aldo-keto reductase; part of the gene cluster that mediates the biosynthesis of calidodehydroaustin, a fungal meroterpenoid. The first step of the pathway is the synthesis of 3,5-dimethylorsellinic acid by the polyketide synthase ausA. 3,5-dimethylorsellinic acid is then prenylated by the polyprenyl transferase ausN. Further epoxidation by the FAD-dependent monooxygenase ausM and cyclization by the probable terpene cyclase ausL lead to the formation of protoaustinoid A. Protoaustinoid A is then oxidized to spiro-lactone preaustinoid A3 by the combined action of the FAD-binding monooxygenases ausB and ausC, and the dioxygenase ausE. Acid-catalyzed keto-rearrangement and ring contraction of the tetraketide portion of preaustinoid A3 by ausJ lead to the formation of preaustinoid A4. The aldo-keto reductase ausK, with the help of ausH, is involved in the next step by transforming preaustinoid A4 into isoaustinone which is in turn hydroxylated by the P450 monooxygenase ausI to form austinolide. The cytochrome P450 monooxygenase ausG modifies austinolide to austinol. Austinol is further acetylated to austin by the O-acetyltransferase ausP, which spontaneously changes to dehydroaustin. The cytochrome P450 monooxygenase ausR then converts dehydroaustin is into 7-dehydrodehydroaustin. The hydroxylation catalyzed by ausR permits the O-acetyltransferase ausQ to add an additional acetyl group to the molecule, leading to the formation of acetoxydehydroaustin. The short chain dehydrogenase ausT catalyzes the reduction of the double bond present between carbon atoms 1 and 2 to convert 7-dehydrodehydroaustin into 1,2-dihydro-7-hydroxydehydroaustin. AusQ catalyzes not only an acetylation reaction but also the addition of the PKS ausV diketide product to 1,2-dihydro-7-hydroxydehydroaustin, forming precalidodehydroaustin. Finally, the iron/alpha-ketoglutarate-dependent dioxygenase converts precalidodehydroaustin into calidodehydroaustin. In Aspergillus calidoustus, this protein is Aldo-keto reductase ausK.